The primary structure comprises 395 residues: MSQLDLGTQSLELERFPPQENSNTLQAWEAADEYLLQNIDLSKIDGRPVLVFNDQFGTLACALHAYRPFSSSDSYMSQLATAHNLRLNHLDESAVTLLSSVDDLPEAPKLVVIKIPKALALLEHQLRALRRVVAPDTVIIAGAKSRDVHNSTLQLFEKILGPTKTTLAWKKARLIHCEVADIPLADAPETIDWPLPNTDYIIHNHANVFSRNNLDIGARFFMEILPYDVTGKIADLGCGNGVVGLIALEQNPLAEMLFVDESYMAVASSELNITVNRPQDLSRCEFMVSHGLAGVERESLQLVLCNPPFHQQHAVSDHVAWQMFCDAKRCLKAGGELMIVGNRHLDYFHKLKRLFGNCETLDSNQKFMVLKSVKQASSRSEGGGSGSLDMSYSDF.

This sequence belongs to the methyltransferase superfamily. RlmG family.

The protein resides in the cytoplasm. The catalysed reaction is guanosine(1835) in 23S rRNA + S-adenosyl-L-methionine = N(2)-methylguanosine(1835) in 23S rRNA + S-adenosyl-L-homocysteine + H(+). Its function is as follows. Specifically methylates the guanine in position 1835 (m2G1835) of 23S rRNA. The sequence is that of Ribosomal RNA large subunit methyltransferase G from Yersinia pestis (strain Pestoides F).